A 1105-amino-acid chain; its full sequence is Probable diguanylate cyclase DgcE (1105 aa).

10 helical membrane-spanning segments follow: residues 9-29 (LIAL…SFIF), 38-58 (QFGT…VAFY), 64-84 (MWPG…ILLF), 88-108 (SLNM…AVLL), 127-147 (LALG…VLLT), 156-176 (FLIW…LGLL), 190-207 (LLFE…LSWL), 211-228 (YLPW…WSAV), 236-256 (FLIF…DPSL), and 270-290 (WLPF…MYAF). The PAS 1 domain occupies 300–370 (SETHFRNAME…QQVEKLISGE (71 aa)). PAC domains are found at residues 374–426 (YSME…VNQQ) and 501–552 (FKLE…ALFQ). One can recognise a PAS 2 domain in the interval 553–623 (EKERLHITLD…LMENIYSADT (71 aa)). One can recognise a PAC 3 domain in the interval 626–680 (SAIEQDVVLHCRSGGSYDVHYSITPLSTLDGSNIGSVLVIQDVTESRKMLRQLSY). Residues 712–845 (QRHALVFIDL…GRGRVTVYEP (134 aa)) enclose the GGDEF domain. Residue D720 coordinates Mg(2+). Residues N728, H733, and D737 each contribute to the substrate site. D763 lines the Mg(2+) pocket. Residue D763 is the Proton acceptor of the active site. R783 serves as a coordination point for substrate. In terms of domain architecture, EAL spans 855–1104 (AAMSLDEQWR…LLVNSSYFAI (250 aa)).

Homodimer. It depends on Mg(2+) as a cofactor.

The protein localises to the cell inner membrane. It catalyses the reaction 2 GTP = 3',3'-c-di-GMP + 2 diphosphate. It functions in the pathway purine metabolism; 3',5'-cyclic di-GMP biosynthesis. Functionally, catalyzes the synthesis of cyclic-di-GMP (c-di-GMP) via the condensation of 2 GTP molecules. Involved in the control of the switch from cell motility to adhesion via regulation of cellular levels of c-di-GMP. Part of a signaling cascade that regulates curli biosynthesis. The cascade is composed of two c-di-GMP control modules, in which c-di-GMP controlled by the DgcE/PdeH pair (module I) regulates the activity of the DgcM/PdeR pair (module II), which in turn regulates activity of the transcription factor MlrA and expression of the master biofilm regulator csgD. The protein is Probable diguanylate cyclase DgcE of Escherichia coli (strain K12).